We begin with the raw amino-acid sequence, 762 residues long: Probable inorganic carbon transporter subunit DabA (762 aa).

Zn(2+) contacts are provided by C279, D281, H461, and C476.

The protein belongs to the inorganic carbon transporter (TC 9.A.2) DabA family. In terms of assembly, forms a complex with DabB. Zn(2+) serves as cofactor.

Its subcellular location is the cell inner membrane. Its function is as follows. Part of an energy-coupled inorganic carbon pump. This chain is Probable inorganic carbon transporter subunit DabA, found in Legionella pneumophila (strain Lens).